The chain runs to 307 residues: Cyclooctat-9-en-7-ol synthase (307 aa).

Positions 110, 220, 224, and 228 each coordinate Mg(2+). A DDXXD motif; degenerate motif is present at residues 110–113; sequence DDMD. The short motif at 220–228 is the NSE/DTE motif element; sequence NDFYSYDRE.

This sequence belongs to the terpene synthase family. In terms of assembly, homodimer. Requires Mg(2+) as cofactor.

It catalyses the reaction geranylgeranyl diphosphate + H2O = cyclooctat-9-en-7-ol + diphosphate. Functionally, catalyzes the cyclization of the linear isoprenoid intermediate geranylgeranyl diphosphate to tricycclic cyclooctat-9-en-7-ol in the cyclooctatin biosynthesis pathway. Cyclooctatin is a potent inhibitor of lysophospholipase. The chain is Cyclooctat-9-en-7-ol synthase from Streptomyces melanosporofaciens.